The primary structure comprises 118 residues: MSTEPSKTLETFENPNPERDYTIRMEIPEFTCLCPKTGQPDFATLNLEYIPERHCVELKSLKLYIWSYRDVGGFHEALTNQILGDLVAATQPRYMKLTAHFNVRGGIWTTVEAEHHGR.

The active-site Thioimide intermediate is the Cys34. Asp41 (proton donor) is an active-site residue. Substrate-binding positions include 56-58 (VEL) and 75-76 (HE).

It belongs to the GTP cyclohydrolase I family. QueF type 1 subfamily.

It is found in the cytoplasm. The enzyme catalyses 7-aminomethyl-7-carbaguanine + 2 NADP(+) = 7-cyano-7-deazaguanine + 2 NADPH + 3 H(+). The protein operates within tRNA modification; tRNA-queuosine biosynthesis. Its function is as follows. Catalyzes the NADPH-dependent reduction of 7-cyano-7-deazaguanine (preQ0) to 7-aminomethyl-7-deazaguanine (preQ1). In Halorhodospira halophila (strain DSM 244 / SL1) (Ectothiorhodospira halophila (strain DSM 244 / SL1)), this protein is NADPH-dependent 7-cyano-7-deazaguanine reductase.